We begin with the raw amino-acid sequence, 391 residues long: 1-deoxy-D-xylulose 5-phosphate reductoisomerase (391 aa).

Asn109 is a binding site for NADPH. Lys110 contacts 1-deoxy-D-xylulose 5-phosphate. Glu111 serves as a coordination point for NADPH. Asp135 contacts Mn(2+). The 1-deoxy-D-xylulose 5-phosphate site is built by Ser136, Glu137, Ser171, and His194. Mn(2+) is bound at residue Glu137. Gly200 lines the NADPH pocket. Positions 207, 212, 213, and 216 each coordinate 1-deoxy-D-xylulose 5-phosphate. Mn(2+) is bound at residue Glu216.

It belongs to the DXR family. Homodimer. Mg(2+) serves as cofactor. The cofactor is Mn(2+).

The catalysed reaction is 2-C-methyl-D-erythritol 4-phosphate + NADP(+) = 1-deoxy-D-xylulose 5-phosphate + NADPH + H(+). It functions in the pathway isoprenoid biosynthesis; isopentenyl diphosphate biosynthesis via DXP pathway; isopentenyl diphosphate from 1-deoxy-D-xylulose 5-phosphate: step 1/6. Functionally, catalyzes the NADPH-dependent rearrangement and reduction of 1-deoxy-D-xylulose-5-phosphate (DXP) to 2-C-methyl-D-erythritol 4-phosphate (MEP). This chain is 1-deoxy-D-xylulose 5-phosphate reductoisomerase, found in Blochmanniella floridana.